Consider the following 499-residue polypeptide: Salviol synthase (499 aa).

Residues 4-24 (HIPSLVLCISFFIFFKIVSKL) form a helical membrane-spanning segment. Cys-436 is a heme binding site.

The protein belongs to the cytochrome P450 family. It depends on heme as a cofactor. As to expression, expressed in leaf glandular trichomes.

Its subcellular location is the membrane. The enzyme catalyses ferruginol + reduced [NADPH--hemoprotein reductase] + O2 = salviol + oxidized [NADPH--hemoprotein reductase] + H2O + H(+). It participates in secondary metabolite biosynthesis; terpenoid biosynthesis. In terms of biological role, monooxygenase involved in the biosynthesis of labdane-related diterpenes natural products. Catalyzes the oxidation of ferruginol to produce salviol. Salviol is an intermediate in the biosynthesis of carnosate, a potent antioxidant. This chain is Salviol synthase, found in Salvia pomifera (Apple sage).